Consider the following 78-residue polypeptide: Defensin-like protein 308 (78 aa).

The N-terminal stretch at 1–19 is a signal peptide; it reads MKTSAFFIAVLLILSCSSS. Disulfide bonds link Cys-31/Cys-50, Cys-37/Cys-55, and Cys-41/Cys-57.

This sequence belongs to the DEFL family.

It is found in the secreted. This is Defensin-like protein 308 from Arabidopsis thaliana (Mouse-ear cress).